The chain runs to 375 residues: 23S rRNA (uracil(747)-C(5))-methyltransferase RlmC (375 aa).

[4Fe-4S] cluster-binding residues include C3, C11, C14, and C87. Positions 212, 241, 262, and 307 each coordinate S-adenosyl-L-methionine. The Nucleophile role is filled by C334.

It belongs to the class I-like SAM-binding methyltransferase superfamily. RNA M5U methyltransferase family. RlmC subfamily.

The catalysed reaction is uridine(747) in 23S rRNA + S-adenosyl-L-methionine = 5-methyluridine(747) in 23S rRNA + S-adenosyl-L-homocysteine + H(+). In terms of biological role, catalyzes the formation of 5-methyl-uridine at position 747 (m5U747) in 23S rRNA. This chain is 23S rRNA (uracil(747)-C(5))-methyltransferase RlmC, found in Escherichia coli (strain K12 / MC4100 / BW2952).